The primary structure comprises 99 residues: A-type ATP synthase subunit F (99 aa).

Belongs to the V-ATPase F subunit family. In terms of assembly, has multiple subunits with at least A(3), B(3), C, D, E, F, H, I and proteolipid K(x).

It localises to the cell membrane. Functionally, component of the A-type ATP synthase that produces ATP from ADP in the presence of a proton gradient across the membrane. The chain is A-type ATP synthase subunit F from Methanothrix thermoacetophila (strain DSM 6194 / JCM 14653 / NBRC 101360 / PT) (Methanosaeta thermophila).